Consider the following 419-residue polypeptide: Squalene synthase R6 (419 aa).

A helical transmembrane segment spans residues 397-417; it reads TMYLVVLLLGILGVAAAVLMA.

Belongs to the phytoene/squalene synthase family. The cofactor is Mg(2+).

It is found in the membrane. It catalyses the reaction 2 (2E,6E)-farnesyl diphosphate + NADPH + H(+) = squalene + 2 diphosphate + NADP(+). The enzyme catalyses 2 (2E,6E)-farnesyl diphosphate + NADH + H(+) = squalene + 2 diphosphate + NAD(+). It participates in terpene metabolism; lanosterol biosynthesis; lanosterol from farnesyl diphosphate: step 1/3. Functionally, squalene synthase; part of the gene cluster that mediates the biosynthesis of squalestatin S1 (SQS1, also known as zaragozic acid A), a heavily oxidized fungal polyketide that offers potent cholesterol lowering activity by targeting squalene synthase (SS). Catalyzes the condensation of 2 two farnesyl pyrophosphate moieties to form squalene. The presence of a gene encoding a squalene synthase supports the identification of the cluster as being responsible for SQS1 production and suggests a likely mechanism for self-resistance. The chain is Squalene synthase R6 from Phoma sp. (strain ATCC 20986 / MF5453).